Here is a 241-residue protein sequence, read N- to C-terminus: Biosynthetic peptidoglycan transglycosylase (241 aa).

Residues 18–38 traverse the membrane as a helical segment; sequence GVIGIIALWMAGILIFAFLPV.

Belongs to the glycosyltransferase 51 family.

Its subcellular location is the cell inner membrane. The enzyme catalyses [GlcNAc-(1-&gt;4)-Mur2Ac(oyl-L-Ala-gamma-D-Glu-L-Lys-D-Ala-D-Ala)](n)-di-trans,octa-cis-undecaprenyl diphosphate + beta-D-GlcNAc-(1-&gt;4)-Mur2Ac(oyl-L-Ala-gamma-D-Glu-L-Lys-D-Ala-D-Ala)-di-trans,octa-cis-undecaprenyl diphosphate = [GlcNAc-(1-&gt;4)-Mur2Ac(oyl-L-Ala-gamma-D-Glu-L-Lys-D-Ala-D-Ala)](n+1)-di-trans,octa-cis-undecaprenyl diphosphate + di-trans,octa-cis-undecaprenyl diphosphate + H(+). It participates in cell wall biogenesis; peptidoglycan biosynthesis. Functionally, peptidoglycan polymerase that catalyzes glycan chain elongation from lipid-linked precursors. In Yersinia pseudotuberculosis serotype IB (strain PB1/+), this protein is Biosynthetic peptidoglycan transglycosylase.